The sequence spans 732 residues: Catalase-peroxidase (732 aa).

The interval 1–23 (MSEQSKCPVTGRTAGHPVAGGGM) is disordered. The tryptophyl-tyrosyl-methioninium (Trp-Tyr) (with M-246) cross-link spans 97-220 (WHSAGTYRTS…LAAVQMGLIY (124 aa)). The Proton acceptor role is filled by histidine 98. A cross-link (tryptophyl-tyrosyl-methioninium (Tyr-Met) (with W-97)) is located at residues 220–246 (YVNPEGPDGNPDPVAAGRDIRETFARM). Residue histidine 261 coordinates heme b.

This sequence belongs to the peroxidase family. Peroxidase/catalase subfamily. In terms of assembly, homodimer or homotetramer. Heme b serves as cofactor. Formation of the three residue Trp-Tyr-Met cross-link is important for the catalase, but not the peroxidase activity of the enzyme.

It catalyses the reaction H2O2 + AH2 = A + 2 H2O. The enzyme catalyses 2 H2O2 = O2 + 2 H2O. Its function is as follows. Bifunctional enzyme with both catalase and broad-spectrum peroxidase activity. This Chlorobium limicola (strain DSM 245 / NBRC 103803 / 6330) protein is Catalase-peroxidase.